Here is a 157-residue protein sequence, read N- to C-terminus: NudC domain-containing protein 2 (157 aa).

Serine 2 carries the N-acetylserine modification. A CS domain is found at 14 to 104 (CATPWGQWYQ…DAANCWTSLL (91 aa)). The tract at residues 134-157 (FDFSGAEISGNYTKGGPDFSNLEK) is disordered. Serine 142 is modified (phosphoserine). Position 145 is a phosphotyrosine (tyrosine 145).

In terms of assembly, interacts with LIS1.

Its subcellular location is the chromosome. It is found in the centromere. The protein resides in the kinetochore. It localises to the cytoplasm. The protein localises to the cytoskeleton. Its subcellular location is the microtubule organizing center. It is found in the centrosome. The protein resides in the spindle pole. Functionally, may regulate the LIS1/dynein pathway by stabilizing LIS1 with Hsp90 chaperone. The sequence is that of NudC domain-containing protein 2 (Nudcd2) from Rattus norvegicus (Rat).